The primary structure comprises 339 residues: Phenylalanine--tRNA ligase alpha subunit (339 aa).

Glutamate 254 contributes to the Mg(2+) binding site.

Belongs to the class-II aminoacyl-tRNA synthetase family. Phe-tRNA synthetase alpha subunit type 1 subfamily. As to quaternary structure, tetramer of two alpha and two beta subunits. Requires Mg(2+) as cofactor.

It localises to the cytoplasm. It carries out the reaction tRNA(Phe) + L-phenylalanine + ATP = L-phenylalanyl-tRNA(Phe) + AMP + diphosphate + H(+). The chain is Phenylalanine--tRNA ligase alpha subunit from Dictyoglomus turgidum (strain DSM 6724 / Z-1310).